The chain runs to 414 residues: Testis-specific Y-encoded-like protein 4 (414 aa).

Disordered stretches follow at residues 1–129 and 391–414; these read MSGL…AGQK and PRRG…FQSG. Basic and acidic residues predominate over residues 24-40; the sequence is ASGDPDRDQCQGLREET. Residues 101 to 112 show a composition bias toward low complexity; the sequence is EAASAAEAADSS.

The protein belongs to the nucleosome assembly protein (NAP) family.

This is Testis-specific Y-encoded-like protein 4 (TSPYL4) from Homo sapiens (Human).